A 154-amino-acid polypeptide reads, in one-letter code: Phosphopantetheine adenylyltransferase (154 aa).

This sequence belongs to the eukaryotic CoaD family.

The protein localises to the cytoplasm. It carries out the reaction (R)-4'-phosphopantetheine + ATP + H(+) = 3'-dephospho-CoA + diphosphate. Its pathway is cofactor biosynthesis; coenzyme A biosynthesis. Reversibly transfers an adenylyl group from ATP to 4'-phosphopantetheine, yielding dephospho-CoA (dPCoA) and pyrophosphate. The sequence is that of Phosphopantetheine adenylyltransferase from Methanosarcina mazei (strain ATCC BAA-159 / DSM 3647 / Goe1 / Go1 / JCM 11833 / OCM 88) (Methanosarcina frisia).